Here is a 206-residue protein sequence, read N- to C-terminus: Guanylate kinase (206 aa).

The 179-residue stretch at 5–183 (FNLLILSGPS…SKEIILSIAK (179 aa)) folds into the Guanylate kinase-like domain. 12–19 (GPSGAGKS) provides a ligand contact to ATP.

The protein belongs to the guanylate kinase family.

Its subcellular location is the cytoplasm. The catalysed reaction is GMP + ATP = GDP + ADP. Its function is as follows. Essential for recycling GMP and indirectly, cGMP. The polypeptide is Guanylate kinase (gmk) (Helicobacter pylori (strain J99 / ATCC 700824) (Campylobacter pylori J99)).